The following is a 1325-amino-acid chain: MEAVSRVFPALAGQAPEEQGEIIKVKVKEEDHTWDQESALRRNLSYTRELSRQRFRQFCYQETPGPREALSQLRELCRQWLNPEIHTKEQILELLVLEQFLTILPEELQSWVREHNPESGEEVVTLLEDLERELDEPRQQVSQGTYGQEVSMEEMIPLDSAKESLGTQLQSMEDRMECESPEPHPLQDNGSFLWFSMMSQSMGGDNLSSLDTNEAEIEPENMREKFFRSLARLLENKSNNTKIFSKAKYCQLIKEVKEAKAKAKKESVDYRRLARFDVILVQGNEKLIEAVNGETDKIRYYLHSEDLFDILHNTHLSIGHGGRTRMEKELQAKYKNITKEVIMLYLTLCKPCQQKNSKLKKVLTSKSIKEVSSRCQVDLIDMQLNPDGEYRFILHYQDLCTKLTFLRSLKSKRPTEVAHALLDIFTIIGAPSVLQSDNGREFSSQVVSELSNIWPELKIVHGKSQTCQSQSSAEQTEDIRKRIFSWMQTNNSSHWTEFLWFIQMSQNQPYHRSMQQTPCESAFSSEAKLGLSHSQLTEELVASLHTENELDQADKELENTLRAQYEENIETGTDSSDIEENLSVTPKVAEKSPPESRLRFLSCVVCEKECTGVNSCISCDGNIHAICGVPSQHGTEGCGRQITCSLCYETSTMKRKHDEIQRSLPVKPSKMLKPSGTPFSPDKVGDWMAKQASLDFFVKKRHAFSEHSSSNKRNVNNRSYPEEGKTKRVHASFTRKYDPSYIEFGFVAVIDGEVLKPQCIICGDVLANEAMKPSKLKRHLYSKHKEISSQPKEFFERKSSELKSQPKQVFNVSHINISALRASYKVALPVAKSKTPYTIAETLVKDCIKEVCLEMLGESAAKKVAQVPLSNDTIARRIQELANDMEDQLIEQIKLAKYFSLQLDECRDIANMIILLVYVRFEHDDDIKEEFFFSASLPTNTTSSELYEAVKNYIVNKCGLEFKFCVGVCSDGAASMTGKHSEVVTQIKELAPECKTTHCFIHRESLAMKKISAELNSVLNDIVKIVNYIKSNSLNSRLFSLLCDNMEADHKQLLLHAEIRWLSRGKVLSRMFEIRNELLVFLQGKKPMWSQLFKDVNWTARLAYLSDIFSIFNDLNASMQGKNATYFSMADKVEGQKQKLEAWKNRISTDCYDMFHNLTTIINEVGNDLDIAHLRKVISEHLTNLLECFEFYFPSKEDPRIGNLWIQNPFLSSKDNLNLTVTLQDKLLKLATDEGLKISFENTASLPSFWIKAKNDYPELAEIALKLLLLFPSTYLCETGFSTLSVIKTKHRNSLNIHYPLRVALSSIQPRLDKLTSKKQAHLSH.

Residues 52–134 (RQRFRQFCYQ…TLLEDLEREL (83 aa)) enclose the SCAN box domain. Positions 246 to 275 (KAKYCQLIKEVKEAKAKAKKESVDYRRLAR) form a coiled coil. In terms of domain architecture, Integrase catalytic spans 366–526 (KSIKEVSSRC…TPCESAFSSE (161 aa)). A coiled-coil region spans residues 542 to 568 (ASLHTENELDQADKELENTLRAQYEEN).

Weakly expressed in the lung (at protein level).

It is found in the nucleus. The sequence is that of SCAN domain-containing protein 3 from Homo sapiens (Human).